A 517-amino-acid polypeptide reads, in one-letter code: FAD-dependent monooxygenase dmxR9 (517 aa).

Residues V96 and R162 each contribute to the FAD site. Residues R243 and Y270 contribute to the active site. 2 residues coordinate FAD: D365 and A378.

Belongs to the paxM FAD-dependent monooxygenase family. Requires FAD as cofactor.

It functions in the pathway secondary metabolite biosynthesis. In terms of biological role, FAD-dependent monooxygenase; part of the gene cluster that mediates the biosynthesis of the dimeric xanthones cryptosporioptides. The pathway begins with the synthesis of atrochrysone thioester by the polyketide synthase dmx-nrPKS. The atrochrysone carboxyl ACP thioesterase dmxR1 then breaks the thioester bond and releases the atrochrysone carboxylic acid from dmx-nrPKS. Atrochrysone carboxylic acid is decarboxylated by the decarboxylase dmxR15, and oxidized by the anthrone oxygenase dmxR16 to yield emodin. Emodin is then reduced to emodin hydroquinone by the oxidoreductase dmxR7. A-ring reduction by the short chain dehydrogenase dmxR18, dehydration by the scytalone dehydratase-like protein dmxR17 and probable spontaneous re-oxidation, results in overall deoxygenation to chrysophanol. Baeyer-Villiger oxidation by the Baeyer-Villiger monooxygenase (BVMO) dmxR6 then yields monodictylactone in equilibrium with monodictyphenone. In the case of the cryptosporioptides biosynthesis, monodictylactone is reduced at C-12 to an alcohol (by the short chain dehydrogenases dmxR12 or dmxR8) and hydroxylated at C-5 by dmxR9, yielding the electron-rich aromatic which could eliminate H(2)O to form the ortho-quinonemethide, followed by tautomerisation to paraquinone and complete the formal reduction to produce the 10-methylgroup. Conjugate addition of C-4a-OH to the resulting paraquinone by the monooxygenase dmxR10 then gives cyclohexadienone, which is then reduced at C-5 by the short chain dehydrogenase dmxR3 to give the dihydroxanthone. The 6,7-epoxide in the cryptosporioptides could be introduced by the cytochrome P450 monooxygenase dmxL3. The highly reducing PKS dmxL2 manufactures butyrate, which is further carboxylated by dmxL1 to form ethylmalonate. It is not yet clear whether the carboxylation occurs while the butyrate is attached to the ACP of dmxL2, but this unusual fungal metabolite could then be esterified to O-5 by the O-acetyltransferase dmxR13. Finally, dimerization performed by dmxR5 gives the observed dimers cryptosporioptides A, B and C as the final products of the pathway. The sequence is that of FAD-dependent monooxygenase dmxR9 from Cryptosporiopsis sp. (strain 8999).